The chain runs to 672 residues: Prion-like-(Q/N-rich) domain-bearing protein 25 (672 aa).

The chain crosses the membrane as a helical span at residues 26-46 (VPPPIMICLFFLLLQIFVISV).

It is found in the membrane. In Caenorhabditis elegans, this protein is Prion-like-(Q/N-rich) domain-bearing protein 25 (pqn-25).